Consider the following 578-residue polypeptide: Frizzled-2 (578 aa).

A signal peptide spans 1–17; that stretch reads MLLRISVLFLLLGSCGA. Over 18 to 236 the chain is Extracellular; that stretch reads LFGKRQKCEQ…AESHSLVSNW (219 aa). One can recognise an FZ domain in the interval 20-144; it reads GKRQKCEQIT…MSTGNICAAP (125 aa). Cystine bridges form between Cys25–Cys86, Cys33–Cys79, Cys70–Cys108, Cys97–Cys141, and Cys101–Cys125. Asn39 carries N-linked (GlcNAc...) asparagine glycosylation. Residues 138–175 are disordered; it reads GNICAAPPDTPKKQHKGHHHKNQNQNQNQNHNYSPDGP. Over residues 150-159 the composition is skewed to basic residues; the sequence is KQHKGHHHKN. Over residues 160–169 the composition is skewed to low complexity; that stretch reads QNQNQNQNHN. A glycan (N-linked (GlcNAc...) asparagine) is linked at Asn213. The chain crosses the membrane as a helical span at residues 237-257; the sequence is MAFWSITCCVLASFTFLTFLI. Residues 258–268 are Cytoplasmic-facing; the sequence is ETDRFQYPERP. Residues 269–289 form a helical membrane-spanning segment; that stretch reads IFMLAFCQLMVAVGFMIRYFV. Over 290–312 the chain is Extracellular; it reads GHEEIACDSMRIKGADDNSGSLC. Residues 313-333 traverse the membrane as a helical segment; the sequence is FVVFLLTYFFGMAASVWWVIL. At 334–354 the chain is on the cytoplasmic side; sequence SLTWVLSAASKWSPEAISSFS. A helical transmembrane segment spans residues 355–375; sequence FHFHVVGWCLPAIQTVLVIVF. The Extracellular segment spans residues 376–398; that stretch reads NAIDGDPITGICYVGNTDLQFQR. The helical transmembrane segment at 399-419 threads the bilayer; that stretch reads IFVLFPLLVYFIVGVLFLVIG. Residues 420–449 are Cytoplasmic-facing; it reads FCNLWSIRNEVQKQHPSLESAHKITQLMSK. Residues 450-470 traverse the membrane as a helical segment; the sequence is IGIFSLLYTIPSLLIICVLFY. Residues 471–497 lie on the Extracellular side of the membrane; sequence EQNHRSLWEQSQLCSCSPKQTIGDSSL. The helical transmembrane segment at 498–518 threads the bilayer; sequence IISLIKTCCMCILGWTSGFWV. Residues 519–578 are Cytoplasmic-facing; sequence CSTKTLSSWKNAICCLGSSRSLPKYQPADILYAKSDMSSSQFYNTSLRHNHLYGGIPDKL. A Lys-Thr-X-X-X-Trp motif, mediates interaction with the PDZ domain of Dvl family members motif is present at residues 522–527; it reads KTLSSW. Residues 556 to 558 carry the PDZ-binding motif; the sequence is SSS.

Belongs to the G-protein coupled receptor Fz/Smo family. In terms of tissue distribution, expressed in two pairs of head neurons and throughout the pharynx.

The protein resides in the cell membrane. Receptor for Wnt proteins. Most frizzled receptors are coupled to the beta-catenin canonical signaling pathway, which leads to the activation of disheveled proteins, inhibition of gsk-3 kinase, nuclear accumulation of beta-catenin and activation of Wnt target genes. A second signaling pathway involving PKC and calcium fluxes has been seen for some family members, but it is not yet clear if it represents a distinct pathway or if it can be integrated in the canonical pathway, as PKC seems to be required for Wnt-mediated inactivation of gsk-3 kinase. Both pathways seem to involve interactions with G-proteins. Required for the migration and axon formation and guidance of different neuronal cell types including canal-associated neurons (CAN), hermaphrodite-specific neurons (HSN), anterior lateral microtubule neurons (ALM), and the right Q neuroblast (QR) and its descendants. Directs ALM migration through frizzled protein mom-5 and Wnt ligands cwn-1, cwn-2 and egl-20. May act redundantly with mom-5 to direct CAN migration. Plays a role in the organization of head ganglion cells. Probably by acting as a receptor for Wnt ligand cwn-2, plays a role in the positioning of the nerve ring and may in addition positively regulate the neurite outgrowth of RME GABAergic motor neurons along the anterior-posterior axis of the body. This chain is Frizzled-2, found in Caenorhabditis elegans.